Here is an 874-residue protein sequence, read N- to C-terminus: Protein translocase subunit SecA (874 aa).

ATP-binding positions include glutamine 85, 103 to 107, and aspartate 492; that span reads GEGKT. Positions 839–854 are enriched in basic and acidic residues; sequence EEGPKKPYRREQKIGR. The disordered stretch occupies residues 839–864; sequence EEGPKKPYRREQKIGRNDPCPCGSGK. Positions 858, 860, 869, and 870 each coordinate Zn(2+).

The protein belongs to the SecA family. Monomer and homodimer. Part of the essential Sec protein translocation apparatus which comprises SecA, SecYEG and auxiliary proteins SecDF. Other proteins may also be involved. It depends on Zn(2+) as a cofactor.

It localises to the cell membrane. It is found in the cytoplasm. It catalyses the reaction ATP + H2O + cellular proteinSide 1 = ADP + phosphate + cellular proteinSide 2.. Part of the Sec protein translocase complex. Interacts with the SecYEG preprotein conducting channel. Has a central role in coupling the hydrolysis of ATP to the transfer of proteins into and across the cell membrane, serving as an ATP-driven molecular motor driving the stepwise translocation of polypeptide chains across the membrane. The protein is Protein translocase subunit SecA of Carboxydothermus hydrogenoformans (strain ATCC BAA-161 / DSM 6008 / Z-2901).